A 37-amino-acid chain; its full sequence is Large ribosomal subunit protein bL36c (37 aa).

Belongs to the bacterial ribosomal protein bL36 family.

Its subcellular location is the plastid. It is found in the chloroplast. This chain is Large ribosomal subunit protein bL36c (rpl36), found in Chlorella vulgaris (Green alga).